Consider the following 386-residue polypeptide: Succinate--CoA ligase [ADP-forming] subunit beta (386 aa).

Positions 9–244 (KELLKQFGVP…LDEEDPAEIE (236 aa)) constitute an ATP-grasp domain. ATP contacts are provided by residues K46, 53–55 (GRG), E99, A102, and E107. 2 residues coordinate Mg(2+): N199 and D213. Residues N264 and 321–323 (GIM) each bind substrate.

This sequence belongs to the succinate/malate CoA ligase beta subunit family. Heterotetramer of two alpha and two beta subunits. Mg(2+) serves as cofactor.

The enzyme catalyses succinate + ATP + CoA = succinyl-CoA + ADP + phosphate. It catalyses the reaction GTP + succinate + CoA = succinyl-CoA + GDP + phosphate. It functions in the pathway carbohydrate metabolism; tricarboxylic acid cycle; succinate from succinyl-CoA (ligase route): step 1/1. In terms of biological role, succinyl-CoA synthetase functions in the citric acid cycle (TCA), coupling the hydrolysis of succinyl-CoA to the synthesis of either ATP or GTP and thus represents the only step of substrate-level phosphorylation in the TCA. The beta subunit provides nucleotide specificity of the enzyme and binds the substrate succinate, while the binding sites for coenzyme A and phosphate are found in the alpha subunit. This is Succinate--CoA ligase [ADP-forming] subunit beta from Bordetella avium (strain 197N).